A 131-amino-acid chain; its full sequence is Small ribosomal subunit protein uS8 (131 aa).

It belongs to the universal ribosomal protein uS8 family. As to quaternary structure, part of the 30S ribosomal subunit. Contacts proteins S5 and S12.

One of the primary rRNA binding proteins, it binds directly to 16S rRNA central domain where it helps coordinate assembly of the platform of the 30S subunit. This chain is Small ribosomal subunit protein uS8, found in Burkholderia lata (strain ATCC 17760 / DSM 23089 / LMG 22485 / NCIMB 9086 / R18194 / 383).